An 83-amino-acid polypeptide reads, in one-letter code: Large ribosomal subunit protein eL14 (83 aa).

Belongs to the eukaryotic ribosomal protein eL14 family.

The sequence is that of Large ribosomal subunit protein eL14 from Thermococcus gammatolerans (strain DSM 15229 / JCM 11827 / EJ3).